Reading from the N-terminus, the 225-residue chain is Proteoglycan 3 (225 aa).

Positions 1–17 (MQCLLLLPFLLLGTVSA) are cleaved as a signal peptide. Residues 107 to 224 (CKICRYLLVR…CDKQLPFVCS (118 aa)) enclose the C-type lectin domain. 2 cysteine pairs are disulfide-bonded: C128/C223 and C200/C215.

As to expression, expressed in bone marrow. Not detected in placenta.

It is found in the cytoplasmic granule. In terms of biological role, possesses similar cytotoxic and cytostimulatory activities to PRG2/MBP. In vitro, stimulates neutrophil superoxide production and IL8 release, and histamine and leukotriene C4 release from basophils. The polypeptide is Proteoglycan 3 (Homo sapiens (Human)).